The following is a 193-amino-acid chain: NADH-quinone oxidoreductase subunit B (193 aa).

Positions 49, 50, 115, and 144 each coordinate [4Fe-4S] cluster. The segment at 172–193 (FKKEEPREANAPVPVNTEMPLE) is disordered.

The protein belongs to the complex I 20 kDa subunit family. As to quaternary structure, NDH-1 is composed of 14 different subunits. Subunits NuoB, C, D, E, F, and G constitute the peripheral sector of the complex. It depends on [4Fe-4S] cluster as a cofactor.

The protein resides in the cell inner membrane. It carries out the reaction a quinone + NADH + 5 H(+)(in) = a quinol + NAD(+) + 4 H(+)(out). Functionally, NDH-1 shuttles electrons from NADH, via FMN and iron-sulfur (Fe-S) centers, to quinones in the respiratory chain. The immediate electron acceptor for the enzyme in this species is believed to be ubiquinone. Couples the redox reaction to proton translocation (for every two electrons transferred, four hydrogen ions are translocated across the cytoplasmic membrane), and thus conserves the redox energy in a proton gradient. The sequence is that of NADH-quinone oxidoreductase subunit B from Akkermansia muciniphila (strain ATCC BAA-835 / DSM 22959 / JCM 33894 / BCRC 81048 / CCUG 64013 / CIP 107961 / Muc).